Consider the following 901-residue polypeptide: MLPGCYTHRLNMSDTQDPPQDESTTDESADALDGEYDPREIEPEWQDQWVADKTYAYDEDADTRFSIDTPPPTVSGNLHMGHLYQFTLQDFVARFHRMRDDTVYFPFGYDDNGIASERLTERELDIRHQDYPRREFQEKCRDVCTQFEDEFTQDVQSLAISIDWDNTYKTIAPDVQRVSQLSFLDLYEQGREYRQRAPTIWCPDCETAISQVEQEDKDKHTKFNDIAFDLVETGEGPADEDATFTISTTRPELLPACVAVFVHPDDDENQHLVGGSARVPLFEQEVPVIADERVDMETGSGIVMCCTFGDQNDIEWYQAHDLPLRLAIDESATMTDVAGEYEGMHTTEAREAIIEDLREEGSLLESRDHDHTVQVHERCEEEVEYLVTEQWYIELLDKKEEYIEAGRQMEWYPEKMATRYEHWIEGLEWDWCISRQRDSGIPIPVWYCDDCGEPVMAEREQLPVDPLSDAPPVDSCPECGHDSLTPEEDVFDTWATSSLTPLVNAGWDWDADSESFTMELPELYPFDLRPQGHDIISFWLFHTVVKCYEHTGEVPFENVMINGMVLDENREAMSKSKGNVIPPSEVLEEFPVDATRYWAAGTSIGDDFPYKEGDLEAGERLLQKLWNASRLVDQLTPAARPDEPEELAAVDEWLLAELDATVESVTAKFEDYEFSKARNELRSFFWNTFCDDYLEIAKQRLSDGEAVSTEFTLLQAHRTFLQLFAPFLPHITEELWERCYEEDSSIHTTDWPTSGGYDADLEAGETAMEVVSALRRYKTENGLPLNADLDHVEVFGHIAGFEDAVAEAMHVAQLDTYDEAPDITTEISGIDLDYSLVGPEFGSEVGAIDAAIEDGDYEIDGDTLQVAGVELDDEMFAVEESRTYSGEGEMTETESAVVVVR.

A disordered region spans residues Met-1 to Asp-37. A compositionally biased stretch (acidic residues) spans Pro-19–Glu-35. The 'HIGH' region signature appears at Pro-72–His-82. The short motif at Ala-572–Ser-576 is the 'KMSKS' region element. Lys-575 contributes to the ATP binding site.

It belongs to the class-I aminoacyl-tRNA synthetase family. ValS type 2 subfamily.

The protein localises to the cytoplasm. It carries out the reaction tRNA(Val) + L-valine + ATP = L-valyl-tRNA(Val) + AMP + diphosphate. In terms of biological role, catalyzes the attachment of valine to tRNA(Val). As ValRS can inadvertently accommodate and process structurally similar amino acids such as threonine, to avoid such errors, it has a 'posttransfer' editing activity that hydrolyzes mischarged Thr-tRNA(Val) in a tRNA-dependent manner. This is Valine--tRNA ligase from Haloarcula marismortui (strain ATCC 43049 / DSM 3752 / JCM 8966 / VKM B-1809) (Halobacterium marismortui).